The chain runs to 241 residues: ATP synthase subunit a (241 aa).

8 consecutive transmembrane segments (helical) span residues 29–49 (NSSL…LFGI), 54–74 (VIPG…ISII), 86–106 (IPLI…GVLP), 114–134 (HVIV…IVGF), 153–173 (WLAP…PVSL), 177–197 (LAAN…FIVN), 200–220 (IFFT…EVFV), and 221–241 (AILQ…DAVK).

It belongs to the ATPase A chain family. F-type ATPases have 2 components, CF(1) - the catalytic core - and CF(0) - the membrane proton channel. CF(1) has five subunits: alpha(3), beta(3), gamma(1), delta(1), epsilon(1). CF(0) has three main subunits: a(1), b(2) and c(9-12). The alpha and beta chains form an alternating ring which encloses part of the gamma chain. CF(1) is attached to CF(0) by a central stalk formed by the gamma and epsilon chains, while a peripheral stalk is formed by the delta and b chains.

The protein localises to the cell inner membrane. Functionally, key component of the proton channel; it plays a direct role in the translocation of protons across the membrane. The polypeptide is ATP synthase subunit a (Wolbachia sp. subsp. Drosophila simulans (strain wRi)).